A 704-amino-acid chain; its full sequence is Polyribonucleotide nucleotidyltransferase (704 aa).

Residues D491 and D497 each contribute to the Mg(2+) site. The 60-residue stretch at 558 to 617 (PNYAVIEINSDKIRDVIGKGGATIRQLTEDTGAVIDIDDNGTIRIFGENKAATKEAIRQI) folds into the KH domain. An S1 motif domain is found at 627–695 (GKVYKGTVAR…NRGRIKLTMK (69 aa)).

It belongs to the polyribonucleotide nucleotidyltransferase family. As to quaternary structure, component of the RNA degradosome, which is a multiprotein complex involved in RNA processing and mRNA degradation. Mg(2+) is required as a cofactor.

The protein localises to the cytoplasm. The enzyme catalyses RNA(n+1) + phosphate = RNA(n) + a ribonucleoside 5'-diphosphate. Its function is as follows. Involved in mRNA degradation. Catalyzes the phosphorolysis of single-stranded polyribonucleotides processively in the 3'- to 5'-direction. The protein is Polyribonucleotide nucleotidyltransferase of Psychrobacter sp. (strain PRwf-1).